Consider the following 309-residue polypeptide: Tagatose-6-phosphate kinase (309 aa).

It belongs to the carbohydrate kinase PfkB family. LacC subfamily.

The enzyme catalyses D-tagatofuranose 6-phosphate + ATP = D-tagatofuranose 1,6-bisphosphate + ADP + H(+). It participates in carbohydrate metabolism; D-tagatose 6-phosphate degradation; D-glyceraldehyde 3-phosphate and glycerone phosphate from D-tagatose 6-phosphate: step 1/2. The sequence is that of Tagatose-6-phosphate kinase from Streptococcus pyogenes serotype M4 (strain MGAS10750).